A 421-amino-acid polypeptide reads, in one-letter code: C4-dicarboxylate transport protein (421 aa).

8 consecutive transmembrane segments (helical) span residues 9–29 (VQVI…PDVG), 39–59 (FINA…VLGI), 76–96 (FIYF…VVNI), 145–165 (GDIL…AALG), 185–205 (IIGY…AYTI), 219–239 (LMMS…NIIC), 316–336 (VFGV…LMLT), and 348–368 (FIVL…GLAL).

Belongs to the dicarboxylate/amino acid:cation symporter (DAACS) (TC 2.A.23) family.

The protein localises to the cell membrane. Functionally, responsible for the transport of succinate and fumarate, but not malate, across the membrane. The protein is C4-dicarboxylate transport protein (dctA) of Bacillus subtilis (strain 168).